The chain runs to 677 residues: Methionine--tRNA ligase (677 aa).

Residues Pro15–His25 carry the 'HIGH' region motif. Residues Cys146, Cys149, Cys159, and Cys162 each contribute to the Zn(2+) site. Residues Lys333 to Ser337 carry the 'KMSKS' region motif. Lys336 lines the ATP pocket. Residues Asp575 to Lys677 form the tRNA-binding domain.

Belongs to the class-I aminoacyl-tRNA synthetase family. MetG type 1 subfamily. As to quaternary structure, homodimer. Zn(2+) serves as cofactor.

The protein resides in the cytoplasm. The catalysed reaction is tRNA(Met) + L-methionine + ATP = L-methionyl-tRNA(Met) + AMP + diphosphate. Is required not only for elongation of protein synthesis but also for the initiation of all mRNA translation through initiator tRNA(fMet) aminoacylation. This Salmonella typhimurium (strain LT2 / SGSC1412 / ATCC 700720) protein is Methionine--tRNA ligase.